The primary structure comprises 382 residues: MSALKRMMRVSNRSLIAFIFFFSLSTSCLYFIYVAPGIANTYLFMVQARGIMLRENVKTIGHMIRLYTNKNTTLNGTDYPEGNNTSDYLVQTTTYLPQNFTYSPHLPCPEKLPYMRGFLSVNVSEISFDEVHQLFSKDSEIEPGGHWRPQDCKPRWKVAVLIPFRNRHEHLPIFFLHLIPMLQKQRLEFAFYVIEQTGTQPFNRAMLFNVGFKEAMKDRAWDCVIFHDVDHLPENDRNYYGCGEMPRHFAAKLDKYMYILPYKEFFGGVSGLTVEQFRKINGFPNAFWGWGGEDDDLWNRVHYSGYNVTRPEGDLGKYTSIPHHHRGEVQFLGRYKLLRYSKERQFIDGLNNLLYTPKILVDRLYTNISVNLMPELAPVEDY.

Topologically, residues 1-15 are cytoplasmic; sequence MSALKRMMRVSNRSL. The chain crosses the membrane as a helical; Signal-anchor for type II membrane protein span at residues 16–35; it reads IAFIFFFSLSTSCLYFIYVA. Residues 36–382 lie on the Lumenal side of the membrane; sequence PGIANTYLFM…MPELAPVEDY (347 aa). Asn-71, Asn-75, Asn-83, Asn-84, Asn-99, and Asn-122 each carry an N-linked (GlcNAc...) asparagine glycan. Cys-108 and Cys-152 form a disulfide bridge. UDP-alpha-D-galactose contacts are provided by residues 163 to 167, 202 to 204, 229 to 230, Tyr-258, and Trp-290; these read PFRNR, FNR, and VD. Cys-223 and Cys-242 are oxidised to a cystine. A Mn(2+)-binding site is contributed by Asp-230. 292–295 is an N-acetyl-D-glucosamine binding site; the sequence is GEDD. Asn-307 is a glycosylation site (N-linked (GlcNAc...) asparagine). A Mn(2+)-binding site is contributed by His-323. UDP-alpha-D-galactose is bound at residue 323 to 324; the sequence is HH. Position 334 (Arg-334) interacts with N-acetyl-D-glucosamine. N-linked (GlcNAc...) asparagine glycosylation occurs at Asn-367.

It belongs to the glycosyltransferase 7 family. It depends on Mn(2+) as a cofactor. Mg(2+) serves as cofactor. Ca(2+) is required as a cofactor. As to expression, highest expression in brain with lower levels found in lungs, heart, skeletal muscle and kidney. Lowest expression in testis, liver and spleen.

The protein resides in the golgi apparatus. It localises to the golgi stack membrane. It catalyses the reaction a beta-D-glucosyl-(1&lt;-&gt;1')-N-acylsphing-4-enine + UDP-alpha-D-galactose = a beta-D-Gal-(1-&gt;4)-beta-D-Glc-(1&lt;-&gt;1)-Cer(d18:1(4E)) + UDP + H(+). It participates in protein modification; protein glycosylation. The protein operates within sphingolipid metabolism. Inhibited by EDTA. Its function is as follows. Catalyzes the synthesis of lactosylceramide (LacCer) via the transfer of galactose from UDP-galactose to glucosylceramide (GlcCer). LacCer is the starting point in the biosynthesis of all gangliosides (membrane-bound glycosphingolipids) which play pivotal roles in the CNS including neuronal maturation and axonal and myelin formation. The chain is Beta-1,4-galactosyltransferase 6 from Rattus norvegicus (Rat).